Reading from the N-terminus, the 844-residue chain is Receptor-like protein 49 (844 aa).

The N-terminal stretch at 1–31 (MMYSCRERRMITVKWSLCLIFCLSNSILVFA) is a signal peptide. Over 32 to 803 (KHLCLPDQRD…QDEEKEEEEQ (772 aa)) the chain is Extracellular. N-linked (GlcNAc...) asparagine glycosylation is found at Asn-59, Asn-95, Asn-112, and Asn-159. LRR repeat units follow at residues 102-126 (QHLQKLYLGCNTSFGSLSYNDGLKG), 136-160 (LKYLKVLSLRGCNLFGKIPSSLGNL), 161-183 (SYLTHLDLSFNDFTGVIPDSMGN), 185-208 (NYLRVLNLGKCNFYGKVPSSLGNL), 209-231 (SYLAQLDLSYNDFTREGPDSMGN), 242-265 (LNSLTDIDLGSNQLKGMLPSNMSS), 266-290 (LSKLEYFYIGGNSFSGSIPSSLFMI), 292-313 (SLVELDLQRNHFSALEIGNISS), 315-339 (SKLQVLILGGNNFNPDIVDLSIFSP), 345-362 (YLDVSGINLKISSTVSLP), 363-385 (SPIEYLVLSSCNISEFPKFLRNQ), 386-409 (TKLYSLDISANQIEGQVPEWLWSL), 410-434 (PELQSINISHNSFNGFEGPADVIQG), 436-457 (GELYMLDISSNIFQDPFPLLPV), 458-481 (DSMNFLFSSNNRFSGEIPKTICEL), 482-504 (DNLVMLVLSNNNFSGSIPRCFEN), 506-527 (HLYVLHLRNNNLSGIFPEEAIS), 528-551 (DRLQSLDVGHNLFSGELPKSLINC), 553-574 (ALEFLYVEDNRISDTFPSWLEL), 575-601 (LPNFQILVLRSNEFYGPIFSPGDSLSF), 602-625 (PRLRIFDISENRFTGVLPSDYFAP), 665-689 (FTIYKTIDVSGNRLEGDIPESISLL), 690-713 (KELIVLNMSNNAFTGHIPPSLSNL), 714-737 (SNLQSLDLSQNRLSGSIPGELGEL), and 739-762 (FLARMNFSYNRLEGPIPQTTQIQT). Asn-207 carries N-linked (GlcNAc...) asparagine glycosylation. N-linked (GlcNAc...) asparagine glycosylation occurs at Asn-262. Asn-310 carries N-linked (GlcNAc...) asparagine glycosylation. N-linked (GlcNAc...) asparagine glycosylation is found at Asn-374 and Asn-384. A glycan (N-linked (GlcNAc...) asparagine) is linked at Asn-416. Asn-493, Asn-516, and Asn-550 each carry an N-linked (GlcNAc...) asparagine glycan. 2 N-linked (GlcNAc...) asparagine glycosylation sites follow: Asn-696 and Asn-712. N-linked (GlcNAc...) asparagine glycosylation is present at Asn-744. Residues 804–824 (VFSWIAAAIGYVPGVVCGLTI) form a helical membrane-spanning segment. Topologically, residues 825–844 (GHILVSHKRDWFMRIVSLFT) are cytoplasmic.

This sequence belongs to the RLP family.

It localises to the cell membrane. The polypeptide is Receptor-like protein 49 (Arabidopsis thaliana (Mouse-ear cress)).